The sequence spans 502 residues: Cobyric acid synthase (502 aa).

The 174-residue stretch at 260 to 433 (VLRVAVCAVP…WHGSLESDGF (174 aa)) folds into the GATase cobBQ-type domain. Catalysis depends on C341, which acts as the Nucleophile. H425 is a catalytic residue.

This sequence belongs to the CobB/CobQ family. CobQ subfamily.

It functions in the pathway cofactor biosynthesis; adenosylcobalamin biosynthesis. Its function is as follows. Catalyzes amidations at positions B, D, E, and G on adenosylcobyrinic A,C-diamide. NH(2) groups are provided by glutamine, and one molecule of ATP is hydrogenolyzed for each amidation. This is Cobyric acid synthase from Streptomyces coelicolor (strain ATCC BAA-471 / A3(2) / M145).